Here is a 434-residue protein sequence, read N- to C-terminus: 4-hydroxy-3-methylbut-2-en-1-yl diphosphate synthase (flavodoxin) (434 aa).

A compositionally biased stretch (polar residues) spans 1-15 (MQSEAQSPRSSQICS). Residues 1–24 (MQSEAQSPRSSQICSTEPVFGGHQ) form a disordered region. 4 residues coordinate [4Fe-4S] cluster: Cys-322, Cys-325, Cys-368, and Glu-375.

It belongs to the IspG family. [4Fe-4S] cluster is required as a cofactor.

It catalyses the reaction (2E)-4-hydroxy-3-methylbut-2-enyl diphosphate + oxidized [flavodoxin] + H2O + 2 H(+) = 2-C-methyl-D-erythritol 2,4-cyclic diphosphate + reduced [flavodoxin]. The protein operates within isoprenoid biosynthesis; isopentenyl diphosphate biosynthesis via DXP pathway; isopentenyl diphosphate from 1-deoxy-D-xylulose 5-phosphate: step 5/6. In terms of biological role, converts 2C-methyl-D-erythritol 2,4-cyclodiphosphate (ME-2,4cPP) into 1-hydroxy-2-methyl-2-(E)-butenyl 4-diphosphate. The chain is 4-hydroxy-3-methylbut-2-en-1-yl diphosphate synthase (flavodoxin) from Burkholderia ambifaria (strain MC40-6).